The sequence spans 123 residues: D-ribose pyranase (123 aa).

H20 (proton donor) is an active-site residue. Residues D28, H90, and Y112 to N114 each bind substrate.

The protein belongs to the RbsD / FucU family. RbsD subfamily. In terms of assembly, homodecamer.

The protein localises to the cytoplasm. It carries out the reaction beta-D-ribopyranose = beta-D-ribofuranose. The protein operates within carbohydrate metabolism; D-ribose degradation; D-ribose 5-phosphate from beta-D-ribopyranose: step 1/2. In terms of biological role, catalyzes the interconversion of beta-pyran and beta-furan forms of D-ribose. The polypeptide is D-ribose pyranase (Corynebacterium glutamicum (strain ATCC 13032 / DSM 20300 / JCM 1318 / BCRC 11384 / CCUG 27702 / LMG 3730 / NBRC 12168 / NCIMB 10025 / NRRL B-2784 / 534)).